A 148-amino-acid chain; its full sequence is Deoxyuridine 5'-triphosphate nucleotidohydrolase (148 aa).

Residues Arg-68–Gly-70, Asn-81, Thr-85–Asp-87, and Lys-95 contribute to the substrate site.

This sequence belongs to the dUTPase family. Mg(2+) serves as cofactor.

The catalysed reaction is dUTP + H2O = dUMP + diphosphate + H(+). It participates in pyrimidine metabolism; dUMP biosynthesis; dUMP from dCTP (dUTP route): step 2/2. This enzyme is involved in nucleotide metabolism: it produces dUMP, the immediate precursor of thymidine nucleotides and it decreases the intracellular concentration of dUTP so that uracil cannot be incorporated into DNA. This chain is Deoxyuridine 5'-triphosphate nucleotidohydrolase, found in Rickettsia massiliae (strain Mtu5).